Reading from the N-terminus, the 320-residue chain is MSLGKKIRIGFDGFGRINRFITRGAAQRNDSKLPSRNDALKHGLDGLGSAGSKSFRALAAIGAGVSGLLSFATIAYSDEAEHGLECPNYPWPHEGILSSYDHASIRRGHQVYQQVCASCHSMSLISYRDLVGVAYTEEETKAMAAEIEVVDGPNDEGEMFTRPGKLSDRFPQPYANEAAARFANGGAYPPDLSLITKARHNGQNYVFALLTAYRDPPAGVSIREGLHYNPYFPGGAIAMPKMLNDGAVEYEDGIPATEAQMGKDVVSFLSWAAEPEMEERKLMGFKWIFVLSLALLQAAYYRRLRWSVLKSRKLVLDVVN.

The transit peptide at 1–77 directs the protein to the mitochondrion; sequence MSLGKKIRIG…LLSFATIAYS (77 aa). The Mitochondrial intermembrane segment spans residues 78 to 280; the sequence is DEAEHGLECP…WAAEPEMEER (203 aa). The 108-residue stretch at 103-210 folds into the Cytochrome c domain; sequence ASIRRGHQVY…NGQNYVFALL (108 aa). Positions 116, 119, 120, and 239 each coordinate heme c. The helical transmembrane segment at 281–301 threads the bilayer; sequence KLMGFKWIFVLSLALLQAAYY. Residues 302-320 are Mitochondrial matrix-facing; that stretch reads RRLRWSVLKSRKLVLDVVN.

Belongs to the cytochrome c family. As to quaternary structure, component of the ubiquinol-cytochrome c oxidoreductase (cytochrome b-c1 complex, complex III, CIII), a multisubunit enzyme composed of 3 respiratory subunits cytochrome b, cytochrome c1 and Rieske protein, 2 core protein subunits, and additional low-molecular weight protein subunits. The complex exists as an obligatory dimer and forms supercomplexes (SCs) in the inner mitochondrial membrane with cytochrome c oxidase (complex IV, CIV). The cofactor is heme c. As to expression, in all tissues analyzed.

The protein localises to the mitochondrion inner membrane. The catalysed reaction is a quinol + 2 Fe(III)-[cytochrome c](out) = a quinone + 2 Fe(II)-[cytochrome c](out) + 2 H(+)(out). Component of the ubiquinol-cytochrome c oxidoreductase, a multisubunit transmembrane complex that is part of the mitochondrial electron transport chain which drives oxidative phosphorylation. The respiratory chain contains 3 multisubunit complexes succinate dehydrogenase (complex II, CII), ubiquinol-cytochrome c oxidoreductase (cytochrome b-c1 complex, complex III, CIII) and cytochrome c oxidase (complex IV, CIV), that cooperate to transfer electrons derived from NADH and succinate to molecular oxygen, creating an electrochemical gradient over the inner membrane that drives transmembrane transport and the ATP synthase. The cytochrome b-c1 complex catalyzes electron transfer from ubiquinol to cytochrome c, linking this redox reaction to translocation of protons across the mitochondrial inner membrane, with protons being carried across the membrane as hydrogens on the quinol. In the process called Q cycle, 2 protons are consumed from the matrix, 4 protons are released into the intermembrane space and 2 electrons are passed to cytochrome c. Cytochrome c1 is a catalytic core subunit containing a c-type heme. It transfers electrons from the [2Fe-2S] iron-sulfur cluster of the Rieske protein to cytochrome c. The protein is Cytochrome c1-1, heme protein, mitochondrial (CYCL) of Solanum tuberosum (Potato).